Consider the following 256-residue polypeptide: Deoxyribose-phosphate aldolase (256 aa).

The active-site Proton donor/acceptor is Asp-102. The active-site Schiff-base intermediate with acetaldehyde is the Lys-165. Lys-197 serves as the catalytic Proton donor/acceptor.

This sequence belongs to the DeoC/FbaB aldolase family. DeoC type 2 subfamily.

It is found in the cytoplasm. It catalyses the reaction 2-deoxy-D-ribose 5-phosphate = D-glyceraldehyde 3-phosphate + acetaldehyde. It participates in carbohydrate degradation; 2-deoxy-D-ribose 1-phosphate degradation; D-glyceraldehyde 3-phosphate and acetaldehyde from 2-deoxy-alpha-D-ribose 1-phosphate: step 2/2. Its function is as follows. Catalyzes a reversible aldol reaction between acetaldehyde and D-glyceraldehyde 3-phosphate to generate 2-deoxy-D-ribose 5-phosphate. The sequence is that of Deoxyribose-phosphate aldolase from Shewanella sp. (strain MR-7).